Here is a 294-residue protein sequence, read N- to C-terminus: uncharacterized protein (294 aa).

Positions 1 to 32 (MSHLKDPTTQYYTGEYPKQKQPTPGIQAKMTP) are disordered. N6-acetyllysine is present on K39. 53–77 (LVTGGDSGIGRAAAIAYAREGADVA) is an NADP(+) binding site. S186 contacts substrate. The Proton acceptor role is filled by Y199.

It belongs to the short-chain dehydrogenases/reductases (SDR) family.

This is an uncharacterized protein from Escherichia coli (strain K12).